Consider the following 371-residue polypeptide: Enoyl-[acyl-carrier-protein] reductase [NADH] 2, chloroplastic (371 aa).

Residues 1–67 constitute a chloroplast transit peptide; it reads MGASVTTGLQ…SLNHKRFAVR (67 aa). NAD(+) contacts are provided by residues Gly87, Tyr94, 151 to 152, 198 to 199, and Leu248; these read DA and SL. Catalysis depends on proton acceptor residues Tyr250 and Tyr260. NAD(+) is bound by residues Lys268 and 298–302; that span reads LGSRA.

Belongs to the short-chain dehydrogenases/reductases (SDR) family. FabI subfamily. As to quaternary structure, homotetramer.

The protein localises to the plastid. Its subcellular location is the chloroplast. The catalysed reaction is a 2,3-saturated acyl-[ACP] + NAD(+) = a (2E)-enoyl-[ACP] + NADH + H(+). Its pathway is lipid metabolism; fatty acid biosynthesis. Functionally, catalyzes the NAD-dependent reduction of a carbon-carbon double bond in an enoyl moiety that is covalently linked to an acyl carrier protein (ACP). Catalyzes the last reduction step in the de novo synthesis cycle of fatty acids. Involved in the elongation cycle of fatty acids which are used in lipid metabolism. Required for normal plant growth. The chain is Enoyl-[acyl-carrier-protein] reductase [NADH] 2, chloroplastic from Oryza sativa subsp. japonica (Rice).